Consider the following 358-residue polypeptide: Magnesium-protoporphyrin IX monomethyl ester [oxidative] cyclase 1 (358 aa).

This sequence belongs to the AcsF family. It depends on Fe cation as a cofactor.

The catalysed reaction is Mg-protoporphyrin IX 13-monomethyl ester + 3 NADPH + 3 O2 + 2 H(+) = 3,8-divinyl protochlorophyllide a + 3 NADP(+) + 5 H2O. It participates in porphyrin-containing compound metabolism; chlorophyll biosynthesis (light-independent). Functionally, catalyzes the formation of the isocyclic ring in chlorophyll biosynthesis. Mediates the cyclase reaction, which results in the formation of divinylprotochlorophyllide (Pchlide) characteristic of all chlorophylls from magnesium-protoporphyrin IX 13-monomethyl ester (MgPMME). The sequence is that of Magnesium-protoporphyrin IX monomethyl ester [oxidative] cyclase 1 from Synechocystis sp. (strain ATCC 27184 / PCC 6803 / Kazusa).